The following is a 274-amino-acid chain: Rhamnulose-1-phosphate aldolase (274 aa).

The active site involves glutamate 117. Residues histidine 141, histidine 143, and histidine 212 each coordinate Zn(2+).

It belongs to the aldolase class II family. RhaD subfamily. As to quaternary structure, homotetramer. It depends on Zn(2+) as a cofactor.

Its subcellular location is the cytoplasm. It carries out the reaction L-rhamnulose 1-phosphate = (S)-lactaldehyde + dihydroxyacetone phosphate. It participates in carbohydrate degradation; L-rhamnose degradation; glycerone phosphate from L-rhamnose: step 3/3. Catalyzes the reversible cleavage of L-rhamnulose-1-phosphate to dihydroxyacetone phosphate (DHAP) and L-lactaldehyde. This Yersinia pseudotuberculosis serotype IB (strain PB1/+) protein is Rhamnulose-1-phosphate aldolase.